Consider the following 103-residue polypeptide: Large ribosomal subunit protein bL21 (103 aa).

The protein belongs to the bacterial ribosomal protein bL21 family. As to quaternary structure, part of the 50S ribosomal subunit. Contacts protein L20.

This protein binds to 23S rRNA in the presence of protein L20. The polypeptide is Large ribosomal subunit protein bL21 (Shewanella sp. (strain ANA-3)).